Reading from the N-terminus, the 253-residue chain is Carboxy-S-adenosyl-L-methionine synthase (253 aa).

S-adenosyl-L-methionine-binding positions include Tyr49, Gly74 to Ser76, Asp98 to Asn99, and Asn141.

The protein belongs to the class I-like SAM-binding methyltransferase superfamily. Cx-SAM synthase family.

The catalysed reaction is prephenate + S-adenosyl-L-methionine = carboxy-S-adenosyl-L-methionine + 3-phenylpyruvate + H2O. In terms of biological role, catalyzes the conversion of S-adenosyl-L-methionine (SAM) to carboxy-S-adenosyl-L-methionine (Cx-SAM). This chain is Carboxy-S-adenosyl-L-methionine synthase, found in Trichodesmium erythraeum (strain IMS101).